The following is a 413-amino-acid chain: Cardiolipin synthase B (413 aa).

2 PLD phosphodiesterase domains span residues 108–135 (VFRRMHRKIVVIDARIAFIGGLNYSAEH) and 285–312 (RRRPLHGKVALMDDHWATVGSSNLDPLS). Active-site residues include His-113, Lys-115, Asp-120, His-290, Lys-292, and Asp-297. Residues 390–413 (VDPPAQPTMETQDRVETENTGVKP) form a disordered region.

This sequence belongs to the phospholipase D family. Cardiolipin synthase subfamily. ClsB sub-subfamily.

It is found in the cell membrane. The enzyme catalyses 2 a 1,2-diacyl-sn-glycero-3-phospho-(1'-sn-glycerol) = a cardiolipin + glycerol. Functionally, catalyzes the phosphatidyl group transfer from one phosphatidylglycerol molecule to another to form cardiolipin (CL) (diphosphatidylglycerol) and glycerol. The protein is Cardiolipin synthase B of Escherichia coli O157:H7.